The sequence spans 410 residues: Ribonucleoside-diphosphate reductase small chain (410 aa).

A compositionally biased stretch (polar residues) spans 1 to 20 (MSVQTSPSKQVTSGIQNLNM). Disordered stretches follow at residues 1 to 43 (MSVQ…DEDL) and 55 to 78 (NANK…ANEP). Basic and acidic residues-rich tracts occupy residues 23 to 43 (PAKK…DEDL) and 55 to 65 (NANKKAAEAKK). Positions 146, 177, and 180 each coordinate Fe cation. The active site involves Tyr-184. Fe cation-binding residues include Glu-240, Glu-274, and His-277.

Belongs to the ribonucleoside diphosphate reductase small chain family. In terms of assembly, heterodimer of a large and a small subunit. The cofactor is Fe cation.

The catalysed reaction is a 2'-deoxyribonucleoside 5'-diphosphate + [thioredoxin]-disulfide + H2O = a ribonucleoside 5'-diphosphate + [thioredoxin]-dithiol. Provides the precursors necessary for DNA synthesis. Catalyzes the biosynthesis of deoxyribonucleotides from the corresponding ribonucleotides. In Neurospora crassa (strain ATCC 24698 / 74-OR23-1A / CBS 708.71 / DSM 1257 / FGSC 987), this protein is Ribonucleoside-diphosphate reductase small chain (rnr-2).